A 275-amino-acid polypeptide reads, in one-letter code: Expansin-B6 (275 aa).

An N-terminal signal peptide occupies residues methionine 1–cysteine 25. Asparagine 33 carries N-linked (GlcNAc...) asparagine glycosylation. One can recognise an Expansin-like EG45 domain in the interval glycine 64–leucine 170. Disulfide bonds link cysteine 67-cysteine 95, cysteine 98-cysteine 165, and cysteine 103-cysteine 109. The region spanning valine 183–serine 270 is the Expansin-like CBD domain.

Belongs to the expansin family. Expansin B subfamily. Expressed in internodes.

The protein localises to the secreted. The protein resides in the cell wall. It is found in the membrane. In terms of biological role, may cause loosening and extension of plant cell walls by disrupting non-covalent bonding between cellulose microfibrils and matrix glucans. No enzymatic activity has been found. May be required for rapid internodal elongation in deepwater rice during submergence. The sequence is that of Expansin-B6 (EXPB6) from Oryza sativa subsp. japonica (Rice).